Consider the following 242-residue polypeptide: Interleukin-34 (242 aa).

The first 20 residues, 1–20, serve as a signal peptide directing secretion; that stretch reads MPRGFTWLRYLGIFLGVALG. A glycan (N-linked (GlcNAc...) asparagine) is linked at Asn76. The tract at residues 210-242 is disordered; that stretch reads TQLYPPPPWSPSSPPHSTGSVRPVRAQGEGLLP. Residues 213–223 show a composition bias toward pro residues; the sequence is YPPPPWSPSSP.

The protein belongs to the IL-34 family. In terms of assembly, homodimer. Interacts with CSF1R. As to expression, detected in the sinusoidal epithelium in the red pulp of spleen (at protein level). Predominantly expressed in spleen. Also detected in a range of other tissues including heart, brain, lung, liver, kidney, thymus, testis, ovary, small intestine, prostate and colon.

It is found in the secreted. Functionally, cytokine that promotes the proliferation, survival and differentiation of monocytes and macrophages. Promotes the release of pro-inflammatory chemokines, and thereby plays an important role in innate immunity and in inflammatory processes. Plays an important role in the regulation of osteoclast proliferation and differentiation, and in the regulation of bone resorption. Signaling via CSF1R and its downstream effectors stimulates phosphorylation of MAPK1/ERK2 AND MAPK3/ERK1. This Homo sapiens (Human) protein is Interleukin-34 (IL34).